The chain runs to 148 residues: Deoxyuridine 5'-triphosphate nucleotidohydrolase (148 aa).

Substrate contacts are provided by residues arginine 67–glycine 69, asparagine 80, threonine 84–aspartate 86, and lysine 94.

It belongs to the dUTPase family. It depends on Mg(2+) as a cofactor.

It carries out the reaction dUTP + H2O = dUMP + diphosphate + H(+). Its pathway is pyrimidine metabolism; dUMP biosynthesis; dUMP from dCTP (dUTP route): step 2/2. This enzyme is involved in nucleotide metabolism: it produces dUMP, the immediate precursor of thymidine nucleotides and it decreases the intracellular concentration of dUTP so that uracil cannot be incorporated into DNA. The polypeptide is Deoxyuridine 5'-triphosphate nucleotidohydrolase (Orientia tsutsugamushi (strain Boryong) (Rickettsia tsutsugamushi)).